Reading from the N-terminus, the 611-residue chain is Dihydroxy-acid dehydratase (611 aa).

Aspartate 81 serves as a coordination point for Mg(2+). Position 122 (cysteine 122) interacts with [2Fe-2S] cluster. 2 residues coordinate Mg(2+): aspartate 123 and lysine 124. An N6-carboxylysine modification is found at lysine 124. Cysteine 195 provides a ligand contact to [2Fe-2S] cluster. Glutamate 491 provides a ligand contact to Mg(2+). Serine 517 functions as the Proton acceptor in the catalytic mechanism.

The protein belongs to the IlvD/Edd family. As to quaternary structure, homodimer. It depends on [2Fe-2S] cluster as a cofactor. Mg(2+) is required as a cofactor.

The catalysed reaction is (2R)-2,3-dihydroxy-3-methylbutanoate = 3-methyl-2-oxobutanoate + H2O. The enzyme catalyses (2R,3R)-2,3-dihydroxy-3-methylpentanoate = (S)-3-methyl-2-oxopentanoate + H2O. The protein operates within amino-acid biosynthesis; L-isoleucine biosynthesis; L-isoleucine from 2-oxobutanoate: step 3/4. Its pathway is amino-acid biosynthesis; L-valine biosynthesis; L-valine from pyruvate: step 3/4. Its function is as follows. Functions in the biosynthesis of branched-chain amino acids. Catalyzes the dehydration of (2R,3R)-2,3-dihydroxy-3-methylpentanoate (2,3-dihydroxy-3-methylvalerate) into 2-oxo-3-methylpentanoate (2-oxo-3-methylvalerate) and of (2R)-2,3-dihydroxy-3-methylbutanoate (2,3-dihydroxyisovalerate) into 2-oxo-3-methylbutanoate (2-oxoisovalerate), the penultimate precursor to L-isoleucine and L-valine, respectively. The protein is Dihydroxy-acid dehydratase of Glaesserella parasuis serovar 5 (strain SH0165) (Haemophilus parasuis).